The primary structure comprises 380 residues: Putative glutamate--cysteine ligase 2 (380 aa).

The protein belongs to the glutamate--cysteine ligase type 2 family. YbdK subfamily.

The enzyme catalyses L-cysteine + L-glutamate + ATP = gamma-L-glutamyl-L-cysteine + ADP + phosphate + H(+). Its function is as follows. ATP-dependent carboxylate-amine ligase which exhibits weak glutamate--cysteine ligase activity. The chain is Putative glutamate--cysteine ligase 2 from Pseudomonas entomophila (strain L48).